The primary structure comprises 291 residues: Homoserine kinase (291 aa).

P79 to A89 is a binding site for ATP.

The protein belongs to the GHMP kinase family. Homoserine kinase subfamily.

Its subcellular location is the cytoplasm. The catalysed reaction is L-homoserine + ATP = O-phospho-L-homoserine + ADP + H(+). The protein operates within amino-acid biosynthesis; L-threonine biosynthesis; L-threonine from L-aspartate: step 4/5. In terms of biological role, catalyzes the ATP-dependent phosphorylation of L-homoserine to L-homoserine phosphate. The polypeptide is Homoserine kinase (Leuconostoc citreum (strain KM20)).